The chain runs to 233 residues: Pyridoxine 5'-phosphate synthase (233 aa).

N6 is a binding site for 3-amino-2-oxopropyl phosphate. Residue 8–9 (DH) coordinates 1-deoxy-D-xylulose 5-phosphate. Position 17 (R17) interacts with 3-amino-2-oxopropyl phosphate. The active-site Proton acceptor is the H42. 2 residues coordinate 1-deoxy-D-xylulose 5-phosphate: R44 and H49. E69 functions as the Proton acceptor in the catalytic mechanism. T99 contributes to the 1-deoxy-D-xylulose 5-phosphate binding site. The active-site Proton donor is the H186. Residues G187 and 208–209 (GH) each bind 3-amino-2-oxopropyl phosphate.

The protein belongs to the PNP synthase family. In terms of assembly, homooctamer; tetramer of dimers.

The protein resides in the cytoplasm. The catalysed reaction is 3-amino-2-oxopropyl phosphate + 1-deoxy-D-xylulose 5-phosphate = pyridoxine 5'-phosphate + phosphate + 2 H2O + H(+). Its pathway is cofactor biosynthesis; pyridoxine 5'-phosphate biosynthesis; pyridoxine 5'-phosphate from D-erythrose 4-phosphate: step 5/5. Functionally, catalyzes the complicated ring closure reaction between the two acyclic compounds 1-deoxy-D-xylulose-5-phosphate (DXP) and 3-amino-2-oxopropyl phosphate (1-amino-acetone-3-phosphate or AAP) to form pyridoxine 5'-phosphate (PNP) and inorganic phosphate. This Anaplasma phagocytophilum (strain HZ) protein is Pyridoxine 5'-phosphate synthase.